Reading from the N-terminus, the 429-residue chain is Ribosomal RNA small subunit methyltransferase B (429 aa).

S-adenosyl-L-methionine-binding positions include 254–260, aspartate 277, aspartate 303, and aspartate 322; that span reads CAAPGGK. Cysteine 375 (nucleophile) is an active-site residue.

Belongs to the class I-like SAM-binding methyltransferase superfamily. RsmB/NOP family.

It is found in the cytoplasm. The enzyme catalyses cytidine(967) in 16S rRNA + S-adenosyl-L-methionine = 5-methylcytidine(967) in 16S rRNA + S-adenosyl-L-homocysteine + H(+). Its function is as follows. Specifically methylates the cytosine at position 967 (m5C967) of 16S rRNA. This is Ribosomal RNA small subunit methyltransferase B from Serratia proteamaculans (strain 568).